The chain runs to 387 residues: Zinc homeostasis factor 1 (387 aa).

The next 4 membrane-spanning stretches (helical) occupy residues 10-30, 34-54, 77-97, and 113-133; these read IILLLGIDVTFFFIEIITGYA, LALIADSFHMLNDIVSLLVAL, EILGALSNGVFLIALCMFIFM, and TLMFFVGSLGLLSNFVGIFLF. A compositionally biased stretch (polar residues) spans 195–214; it reads SYTGNHNGAGTSKPVNNHGS. Positions 195-221 are disordered; it reads SYTGNHNGAGTSKPVNNHGSIEQDAPK. Transmembrane regions (helical) follow at residues 234-254 and 263-283; these read FLHVLGDALGNIGVISAALFI and FLFDPCISILLTFIILFSAIP.

It belongs to the cation diffusion facilitator (CDF) transporter (TC 2.A.4) family. SLC30A subfamily.

Its subcellular location is the endoplasmic reticulum membrane. It localises to the nucleus membrane. In terms of biological role, involved in zinc homeostasis, where it plays a role in its accumulation in the endoplasmic reticulum/nucleus. Also has a role in the sequestration of cadmium into the endoplasmic reticulum. This chain is Zinc homeostasis factor 1 (zhf1), found in Schizosaccharomyces pombe (strain 972 / ATCC 24843) (Fission yeast).